The chain runs to 323 residues: tRNA dimethylallyltransferase (323 aa).

12–19 (GPTASGKT) is a binding site for ATP. Substrate is bound at residue 14–19 (TASGKT). Interaction with substrate tRNA stretches follow at residues 37–40 (DSAL) and 161–165 (QRLVR).

It belongs to the IPP transferase family. As to quaternary structure, monomer. The cofactor is Mg(2+).

The enzyme catalyses adenosine(37) in tRNA + dimethylallyl diphosphate = N(6)-dimethylallyladenosine(37) in tRNA + diphosphate. Its function is as follows. Catalyzes the transfer of a dimethylallyl group onto the adenine at position 37 in tRNAs that read codons beginning with uridine, leading to the formation of N6-(dimethylallyl)adenosine (i(6)A). In Azotobacter vinelandii (strain DJ / ATCC BAA-1303), this protein is tRNA dimethylallyltransferase.